The chain runs to 338 residues: Ketol-acid reductoisomerase (NADP(+)) (338 aa).

The KARI N-terminal Rossmann domain maps to 1–181 (MKVFYDKDAD…GGGRAGIIET (181 aa)). Residues 24 to 27 (YGSQ), Arg-47, and Ser-52 contribute to the NADP(+) site. His-107 is an active-site residue. Gly-133 is an NADP(+) binding site. Residues 182-327 (NFREETETDL…SKLRAMMPWI (146 aa)) form the KARI C-terminal knotted domain. Residues Asp-190, Glu-194, Glu-226, and Glu-230 each contribute to the Mg(2+) site. Residue Ser-251 coordinates substrate.

It belongs to the ketol-acid reductoisomerase family. Mg(2+) is required as a cofactor.

It catalyses the reaction (2R)-2,3-dihydroxy-3-methylbutanoate + NADP(+) = (2S)-2-acetolactate + NADPH + H(+). The enzyme catalyses (2R,3R)-2,3-dihydroxy-3-methylpentanoate + NADP(+) = (S)-2-ethyl-2-hydroxy-3-oxobutanoate + NADPH + H(+). The protein operates within amino-acid biosynthesis; L-isoleucine biosynthesis; L-isoleucine from 2-oxobutanoate: step 2/4. It functions in the pathway amino-acid biosynthesis; L-valine biosynthesis; L-valine from pyruvate: step 2/4. Its function is as follows. Involved in the biosynthesis of branched-chain amino acids (BCAA). Catalyzes an alkyl-migration followed by a ketol-acid reduction of (S)-2-acetolactate (S2AL) to yield (R)-2,3-dihydroxy-isovalerate. In the isomerase reaction, S2AL is rearranged via a Mg-dependent methyl migration to produce 3-hydroxy-3-methyl-2-ketobutyrate (HMKB). In the reductase reaction, this 2-ketoacid undergoes a metal-dependent reduction by NADPH to yield (R)-2,3-dihydroxy-isovalerate. This chain is Ketol-acid reductoisomerase (NADP(+)), found in Paraburkholderia xenovorans (strain LB400).